The primary structure comprises 72 residues: Alpha-elapitoxin-Dpp2a (72 aa).

5 cysteine pairs are disulfide-bonded: C3–C21, C14–C42, C27–C31, C46–C57, and C58–C63.

Belongs to the three-finger toxin family. Long-chain subfamily. Type II alpha-neurotoxin sub-subfamily. In terms of tissue distribution, expressed by the venom gland.

The protein resides in the secreted. In terms of biological role, binds with high affinity to muscular (alpha-1/CHRNA1) and neuronal (alpha-7/CHRNA7) nicotinic acetylcholine receptor (nAChR) and inhibits acetylcholine from binding to the receptor, thereby impairing neuromuscular and neuronal transmission. The chain is Alpha-elapitoxin-Dpp2a from Dendroaspis polylepis polylepis (Black mamba).